Here is a 315-residue protein sequence, read N- to C-terminus: WD repeat domain-containing protein 83 (315 aa).

7 WD repeats span residues 23–62, 65–104, 107–146, 151–188, 190–228, 231–272, and 275–313; these read CGQG…LLRT, GHGY…VVRK, GHAG…PEPV, EARD…LFSD, VGSP…LLGE, GHKN…LALA, and VGSG…AEDG.

Belongs to the WD repeat MORG1 family. Interacts with EGLN3/PHD3. Interacts with ERK signaling proteins MAP2K1/MEK1, MAP2K2/MEK2, LAMTOR3, ARAF/Raf-1, MAPK1/ERK2 and MAPK3/ERK1. Identified in the spliceosome C complex. Interacts with PARD6B and CRB3. Interacts strongly with GTP-bound RRAGA but not with inactive GDP-bound. Interacts with p62/SQSTM1.

The protein localises to the cytoplasm. It localises to the lysosome. It is found in the nucleus. Its function is as follows. Molecular scaffold protein for various multimeric protein complexes. Acts as a module in the assembly of a multicomponent scaffold for the ERK pathway, linking ERK responses to specific agonists. At low concentrations it enhances ERK activation, whereas high concentrations lead to the inhibition of ERK activation. Also involved in response to hypoxia by acting as a negative regulator of HIF1A/HIF-1-alpha via its interaction with EGLN3/PHD3. May promote degradation of HIF1A. May act by recruiting signaling complexes to a specific upstream activator. May also be involved in pre-mRNA splicing. Participates in tight junction development by regulating apico-basal polarity, a key step in tissue development and organization. Mechanistically, regulates the translocation of PAR6-aPKC from the cytoplasm to the apical surface by acting as an adapter between PARD6B AND CRB3. Also acts as a negative regulator of mTORC1 under nutrient-rich conditions by binding to the active Rag GTPases to inhibit mTORC1 localization to the lysosome and phosphorylation of downstream targets. This facilitates constitutive basal autophagy during nutrient availability. The sequence is that of WD repeat domain-containing protein 83 (WDR83) from Homo sapiens (Human).